Here is a 637-residue protein sequence, read N- to C-terminus: Chaperone protein HtpG (637 aa).

The interval 1 to 348 (MAEAGQMEKH…SNDLPLNVSR (348 aa)) is a; substrate-binding. Residues 349 to 565 (EILQDNKITR…DNDMSTQMAK (217 aa)) form a b region. Residues 566–637 (LMEAAGQAVP…TRLNKLMLNA (72 aa)) are c.

Belongs to the heat shock protein 90 family. Homodimer.

The protein resides in the cytoplasm. Molecular chaperone. Has ATPase activity. This is Chaperone protein HtpG from Idiomarina loihiensis (strain ATCC BAA-735 / DSM 15497 / L2-TR).